The following is a 476-amino-acid chain: 8-amino-7-oxononanoate synthase (476 aa).

R24 provides a ligand contact to substrate. 171-172 serves as a coordination point for pyridoxal 5'-phosphate; the sequence is GF. H210 contacts substrate. Pyridoxal 5'-phosphate is bound by residues S260, 285–288, and 316–319; these read DDAH and TLSK. K319 is subject to N6-(pyridoxal phosphate)lysine. Substrate is bound at residue T427. Positions 474–476 match the Peroxisomal targeting signal PTS1 motif; sequence PKL.

This sequence belongs to the class-II pyridoxal-phosphate-dependent aminotransferase family. BioF subfamily. Monomer. It depends on pyridoxal 5'-phosphate as a cofactor.

It localises to the cytoplasm. The protein localises to the cytosol. Its subcellular location is the peroxisome. The catalysed reaction is 6-carboxyhexanoyl-[ACP] + L-alanine + H(+) = (8S)-8-amino-7-oxononanoate + holo-[ACP] + CO2. Its pathway is cofactor biosynthesis; biotin biosynthesis; 8-amino-7-oxononanoate from pimeloyl-CoA: step 1/1. In terms of biological role, catalyzes the decarboxylative condensation of pimeloyl-[acyl-carrier protein] and L-alanine to produce 8-amino-7-oxononanoate (AON), [acyl-carrier protein], and carbon dioxide. Required for the biosynthesis of D-biotin that prevents light-mediated cell death and modulates defense gene expression, probably by avoiding hydrogen peroxide H(2)O(2) accumulation. The sequence is that of 8-amino-7-oxononanoate synthase from Arabidopsis thaliana (Mouse-ear cress).